Consider the following 99-residue polypeptide: PE family protein PE13 (99 aa).

The region spanning 1-93 is the PE domain; it reads MSFVMAYPEM…ASSYAATEVA (93 aa).

The protein belongs to the mycobacterial PE family.

The protein resides in the secreted. The protein localises to the cell wall. Functionally, may play a pivotal role in the interaction between M.tuberculosis and host. Can enhance the survival within macrophages under stress conditions such as H(2)O(2), SDS and low pH. Increases the production of IL-6 and IL-1beta from macrophages, and decreases the secretion of suppressor of cytokine signaling 3 (SOCS-3). These changes probably involve the p38-ERK-NF-kappa-B signaling pathway. Also precipitates the macrophage death. The protein is PE family protein PE13 of Mycobacterium tuberculosis (strain ATCC 25618 / H37Rv).